Consider the following 1145-residue polypeptide: DNA polymerase subunit gamma-1, mitochondrial (1145 aa).

Residues 1-9 (MQFHLIRKY) constitute a mitochondrion transit peptide.

Belongs to the DNA polymerase type-A family. As to quaternary structure, component of the DNA polymerase gamma complex consisting of two subunits: the catalytic subunit DNApol-gamma/DNApolG1 and the accessory subunit PolG2/DNApol-gamma35. Requires Mg(2+) as cofactor.

Its subcellular location is the mitochondrion. The enzyme catalyses DNA(n) + a 2'-deoxyribonucleoside 5'-triphosphate = DNA(n+1) + diphosphate. Stimulated by KCl, and inhibited by the small molecules o 2',3'-dideoxythymidine 5'-triphosphate (d2TTP) and N-ethylmaleimide (NEM). As the catalytic component of the DNA polymerase gamma complex is involved in the replication of mitochondrial DNA (mtDNA). Has both 5'-3' DNA polymerase and a highly mispair-specific 3'-5' exonuclease activity. At the end of mtDNA replication DNA ends are ligated to produce a closed circular mtDNA molecule, its exonuclease activity is required for formation of these ligatable ends by preventing DNA synthesis from continuing past the 5'-end of downstream DNA into duplex DNA regions. Does not possess DNA primase activity, does not catalyze strand displacement synthesis and does not contain a 5'-3' exonuclease activity to catalyze nick translation. Important for promoting the elimination of paternal mitochondrial DNA during spermatogenesis, however its exact role in this function has not yet been identified and appears to be independent of its 3'-5'-exonuclease activity and only partially dependent on its DNA polymerase activity. The polypeptide is DNA polymerase subunit gamma-1, mitochondrial (Drosophila melanogaster (Fruit fly)).